Reading from the N-terminus, the 285-residue chain is Urease accessory protein UreD (285 aa).

This sequence belongs to the UreD family. As to quaternary structure, ureD, UreF and UreG form a complex that acts as a GTP-hydrolysis-dependent molecular chaperone, activating the urease apoprotein by helping to assemble the nickel containing metallocenter of UreC. The UreE protein probably delivers the nickel.

It localises to the cytoplasm. Its function is as follows. Required for maturation of urease via the functional incorporation of the urease nickel metallocenter. This chain is Urease accessory protein UreD, found in Cenarchaeum symbiosum (strain A).